Consider the following 170-residue polypeptide: MHCPFCRHPDSRVVDSRTSEDGSSIRRRRQCPECGRRFTTVETTSLSVVKRSGVAQPFSREKVVAGVRKACQGRPVSEDDLALLARRVEETIRATGAAEVDAHEVGLSILGPLRELDEVAYLRFASVYRGFSSLEDFEAAITALRAERENEGDPDADGSADAPVRLTTSV.

A zinc finger lies at 3 to 34; it reads CPFCRHPDSRVVDSRTSEDGSSIRRRRQCPEC. An ATP-cone domain is found at 46–136; it reads LSVVKRSGVA…VYRGFSSLED (91 aa). Residues 148 to 170 are disordered; the sequence is RENEGDPDADGSADAPVRLTTSV.

Belongs to the NrdR family. Requires Zn(2+) as cofactor.

Its function is as follows. Negatively regulates transcription of bacterial ribonucleotide reductase nrd genes and operons by binding to NrdR-boxes. The polypeptide is Transcriptional repressor NrdR (Beutenbergia cavernae (strain ATCC BAA-8 / DSM 12333 / CCUG 43141 / JCM 11478 / NBRC 16432 / NCIMB 13614 / HKI 0122)).